Consider the following 474-residue polypeptide: Putative pectinesterase/pectinesterase inhibitor 38 (474 aa).

A pectinesterase inhibitor 38 region spans residues 1-130; it reads MVFGNEMCDE…HSLESITIDV (130 aa). N-linked (GlcNAc...) asparagine glycosylation is present at Asn80. Residues 164–461 form a pectinesterase 38 region; sequence DVVVAQDGSG…TLPKFIDSAS (298 aa). Substrate is bound by residues Thr241 and Gln271. Residue Asp294 is the Proton donor; for pectinesterase activity of the active site. Cysteines 308 and 328 form a disulfide. Asp315 acts as the Nucleophile; for pectinesterase activity in catalysis. Residue Asn351 is glycosylated (N-linked (GlcNAc...) asparagine). 2 residues coordinate substrate: Arg380 and Trp382. Asn409 carries N-linked (GlcNAc...) asparagine glycosylation.

It in the N-terminal section; belongs to the PMEI family. In the C-terminal section; belongs to the pectinesterase family.

It is found in the secreted. It localises to the cell wall. The catalysed reaction is [(1-&gt;4)-alpha-D-galacturonosyl methyl ester](n) + n H2O = [(1-&gt;4)-alpha-D-galacturonosyl](n) + n methanol + n H(+). It participates in glycan metabolism; pectin degradation; 2-dehydro-3-deoxy-D-gluconate from pectin: step 1/5. In terms of biological role, acts in the modification of cell walls via demethylesterification of cell wall pectin. The polypeptide is Putative pectinesterase/pectinesterase inhibitor 38 (PME38) (Arabidopsis thaliana (Mouse-ear cress)).